The chain runs to 202 residues: Thymidylate kinase (202 aa).

7-14 contacts ATP; the sequence is GIDGSGKT.

Belongs to the thymidylate kinase family.

The catalysed reaction is dTMP + ATP = dTDP + ADP. Its function is as follows. Phosphorylation of dTMP to form dTDP in both de novo and salvage pathways of dTTP synthesis. This is Thymidylate kinase from Ehrlichia ruminantium (strain Gardel).